The primary structure comprises 412 residues: Docking protein 2 (412 aa).

Positions 4–114 constitute a PH domain; sequence GAVKQGFLYL…WVQAICLLAF (111 aa). Positions 147–252 constitute an IRS-type PTB domain; the sequence is PHKEFAVTMR…SAQKNAAPAT (106 aa). Residues 246–296 are disordered; that stretch reads KNAAPATPQPQPATIPASLPRPDSPYSRPHDSLPPPSPTTPVPAPRPRGQE. Y271 carries the phosphotyrosine modification. Residues 277–291 are compositionally biased toward pro residues; sequence SLPPPSPTTPVPAPR. Phosphotyrosine occurs at positions 299 and 345. Residues 359–412 are disordered; it reads SPQEPRGEAWRRQATADRDPAGLQHVQPAGQDFSASGWQPGTEYDNVVLKKGPK. Residues 361 to 378 are compositionally biased toward basic and acidic residues; sequence QEPRGEAWRRQATADRDP.

This sequence belongs to the DOK family. Type A subfamily. As to quaternary structure, interacts with phosphorylated RASGAP and EGFR. Interacts with RET and NCK. Interacts (via PH domain) with TEK/TIE2 (tyrosine phosphorylated). In terms of assembly, (Microbial infection) Interacts with Herpes simplex virus 1 (HHV-1) protein UL46; this interaction induces DOK2 phosphorylation and subsequent degradation. On immunoreceptor stimulation, phosphorylated on C-terminal tyrosine residues. Phosphorylation on Tyr-345 is required for binding to the SH2 domain of NCK. Phosphorylation on both Tyr-271 and Tyr-299 is required for interaction with RASGAP. Phosphorylated on tyrosine residues by TEK/TIE2. In terms of tissue distribution, highly expressed in peripheral blood leukocytes, lymph nodes and spleen. Lower expression in thymus, bone marrow and fetal liver.

In terms of biological role, DOK proteins are enzymatically inert adaptor or scaffolding proteins. They provide a docking platform for the assembly of multimolecular signaling complexes. DOK2 may modulate the cellular proliferation induced by IL-4, as well as IL-2 and IL-3. May be involved in modulating Bcr-Abl signaling. Attenuates EGF-stimulated MAP kinase activation. The polypeptide is Docking protein 2 (DOK2) (Homo sapiens (Human)).